The primary structure comprises 148 residues: Large ribosomal subunit protein uL15 (148 aa).

Over residues 1–30 the composition is skewed to basic residues; that stretch reads MPSRLRKTRKLRGHVSHGHGRIGKHRKHPG. The interval 1-37 is disordered; sequence MPSRLRKTRKLRGHVSHGHGRIGKHRKHPGGRGNAGG. His39 carries the (3S)-3-hydroxyhistidine modification. N6-acetyllysine is present on residues Lys47 and Lys55. Ser68 is subject to Phosphoserine. Lys110 is modified (N6-acetyllysine).

Belongs to the universal ribosomal protein uL15 family. In terms of assembly, component of the large ribosomal subunit. Hydroxylated on His-39 by MINA.

The protein localises to the cytoplasm. In terms of biological role, component of the large ribosomal subunit. The ribosome is a large ribonucleoprotein complex responsible for the synthesis of proteins in the cell. This chain is Large ribosomal subunit protein uL15 (Rpl27a), found in Mus musculus (Mouse).